Reading from the N-terminus, the 1107-residue chain is Miniconductance mechanosensitive channel MscM (1107 aa).

The signal sequence occupies residues 1 to 19 (MRLIITFLMAWCLSWGAYA). The next 11 membrane-spanning stretches (helical) occupy residues 467 to 487 (VMML…ILVG), 522 to 542 (LFWS…LGYG), 551 to 571 (LAVA…VVMI), 600 to 620 (YLMS…FDNL), 628 to 648 (SLGR…TLSL), 674 to 694 (MMIG…LATA), 698 to 718 (LARL…YHVI), 785 to 805 (ILML…HSAF), 828 to 848 (PITL…TQLV), 875 to 895 (TITK…MIGI), and 910 to 930 (GLGF…IILF).

It belongs to the MscS (TC 1.A.23) family. As to quaternary structure, homoheptamer.

It localises to the cell inner membrane. Functionally, mechanosensitive channel that protects cells against hypoosmotic stress when highly overexpressed. Gates spontaneously in response to increased membrane tension. The chain is Miniconductance mechanosensitive channel MscM (mscM) from Escherichia coli (strain K12).